Here is a 124-residue protein sequence, read N- to C-terminus: uncharacterized protein (124 aa).

The signal sequence occupies residues 1-23 (MHKLLKLLSITLIGLSVATGVQA).

Belongs to the cytochrome b562 family.

This is an uncharacterized protein from Pasteurella multocida (strain Pm70).